The following is a 104-amino-acid chain: Thioredoxin (104 aa).

The 103-residue stretch at 2-104 (AIVKVTDSDF…NLAEVLDKHL (103 aa)) folds into the Thioredoxin domain. Cys-29 and Cys-32 are disulfide-bonded.

It belongs to the thioredoxin family.

Component of the thioredoxin-thioredoxin reductase system. Participates in various redox reactions through the reversible oxidation of its active center dithiol to a disulfide and catalyzes dithiol-disulfide exchange reactions. The protein is Thioredoxin (trxA) of Staphylococcus epidermidis (strain ATCC 35984 / DSM 28319 / BCRC 17069 / CCUG 31568 / BM 3577 / RP62A).